A 255-amino-acid polypeptide reads, in one-letter code: Taurine import ATP-binding protein TauB (255 aa).

The region spanning Leu2 to Ser229 is the ABC transporter domain. Gly34–Thr41 lines the ATP pocket.

It belongs to the ABC transporter superfamily. Taurine importer (TC 3.A.1.17.1) family. As to quaternary structure, the complex is composed of two ATP-binding proteins (TauB), two transmembrane proteins (TauC) and a solute-binding protein (TauA).

Its subcellular location is the cell inner membrane. The catalysed reaction is taurine(out) + ATP + H2O = taurine(in) + ADP + phosphate + H(+). Functionally, part of the ABC transporter complex TauABC involved in taurine import. Responsible for energy coupling to the transport system. In Shigella boydii serotype 4 (strain Sb227), this protein is Taurine import ATP-binding protein TauB.